The following is a 267-amino-acid chain: Glutamate 5-kinase (267 aa).

K18 is a binding site for ATP. Substrate-binding residues include S58, D145, and N157. ATP-binding positions include S177–D178 and T219–K225.

This sequence belongs to the glutamate 5-kinase family.

It localises to the cytoplasm. The enzyme catalyses L-glutamate + ATP = L-glutamyl 5-phosphate + ADP. It participates in amino-acid biosynthesis; L-proline biosynthesis; L-glutamate 5-semialdehyde from L-glutamate: step 1/2. Catalyzes the transfer of a phosphate group to glutamate to form L-glutamate 5-phosphate. The polypeptide is Glutamate 5-kinase (Clostridium tetani (strain Massachusetts / E88)).